Reading from the N-terminus, the 659-residue chain is Threonine--tRNA ligase (659 aa).

The TGS domain occupies 1–61 (MIDLIFPDGS…TPDLLGGGNR (61 aa)). The segment at 249–541 (DHRKLGKTMD…LLENYAGHLP (293 aa)) is catalytic. Zn(2+)-binding residues include Cys-341, His-392, and His-518. Positions 637-659 (EEATPPDLARDRAVAAPAELAQA) are disordered.

The protein belongs to the class-II aminoacyl-tRNA synthetase family. In terms of assembly, homodimer. Zn(2+) is required as a cofactor.

The protein localises to the cytoplasm. The catalysed reaction is tRNA(Thr) + L-threonine + ATP = L-threonyl-tRNA(Thr) + AMP + diphosphate + H(+). Catalyzes the attachment of threonine to tRNA(Thr) in a two-step reaction: L-threonine is first activated by ATP to form Thr-AMP and then transferred to the acceptor end of tRNA(Thr). Also edits incorrectly charged L-seryl-tRNA(Thr). This Caulobacter sp. (strain K31) protein is Threonine--tRNA ligase.